Here is a 257-residue protein sequence, read N- to C-terminus: Protein-tyrosine-phosphatase IBR5 (257 aa).

The 137-residue stretch at 49-185 folds into the Tyrosine-protein phosphatase domain; the sequence is FPSEILPEFL…LQEFEQGIFG (137 aa). Cysteine 129 acts as the Phosphocysteine intermediate in catalysis. Positions 235-257 are disordered; that stretch reads QEFTFGATPPKPTTGGDIAMDGS.

The protein belongs to the protein-tyrosine phosphatase family. In terms of assembly, interacts with SKP1A/ASK1 and with MPK12. Expressed in root tips and vasculature, cotyledons, stems, leaves vasculature and hydathodes, flowers, siliques, and seeds.

It is found in the nucleus. It carries out the reaction O-phospho-L-tyrosyl-[protein] + H2O = L-tyrosyl-[protein] + phosphate. Its function is as follows. Required for the transduction of auxin and abscisic acid (ABA) signaling pathways. Dephosphorylates and inactivates the MAP kinase MPK12. In Arabidopsis thaliana (Mouse-ear cress), this protein is Protein-tyrosine-phosphatase IBR5 (IBR5).